The chain runs to 103 residues: Nucleoid-associated protein SUN_2278 (103 aa).

It belongs to the YbaB/EbfC family. As to quaternary structure, homodimer.

The protein resides in the cytoplasm. It is found in the nucleoid. Binds to DNA and alters its conformation. May be involved in regulation of gene expression, nucleoid organization and DNA protection. This chain is Nucleoid-associated protein SUN_2278, found in Sulfurovum sp. (strain NBC37-1).